A 325-amino-acid polypeptide reads, in one-letter code: G/U mismatch-specific uracil DNA glycosylase (325 aa).

Residues 1-11 (MNDIETRDTGT) show a composition bias toward basic and acidic residues. A disordered region spans residues 1-50 (MNDIETRDTGTKNDNSSEFNLSVKSHKRKRSFDDENLELEESREETSGGI). Residues 12-23 (KNDNSSEFNLSV) show a composition bias toward polar residues. Residues 34–43 (DENLELEESR) are compositionally biased toward acidic residues.

This sequence belongs to the uracil-DNA glycosylase (UDG) superfamily. TDG/mug family.

It localises to the nucleus. The enzyme catalyses Specifically hydrolyzes mismatched double-stranded DNA and polynucleotides, releasing free uracil.. In terms of biological role, removes uracil from G/U mispairs in ssDNA. Also corrects G/G mispairs. Does not catalyze the removal of thymine from G/T mispairs. In Schizosaccharomyces pombe (strain 972 / ATCC 24843) (Fission yeast), this protein is G/U mismatch-specific uracil DNA glycosylase (thp1).